A 394-amino-acid polypeptide reads, in one-letter code: Histidinol dehydrogenase (394 aa).

NAD(+) is bound by residues Tyr-113, Gln-172, and Asn-195. Substrate contacts are provided by Thr-218, Gln-240, and His-243. Zn(2+) contacts are provided by Gln-240 and His-243. Active-site proton acceptor residues include Glu-294 and His-295. Substrate is bound by residues His-295, Asp-327, Glu-380, and His-385. Residue Asp-327 coordinates Zn(2+). His-385 serves as a coordination point for Zn(2+).

The protein belongs to the histidinol dehydrogenase family. Requires Zn(2+) as cofactor.

The enzyme catalyses L-histidinol + 2 NAD(+) + H2O = L-histidine + 2 NADH + 3 H(+). Its pathway is amino-acid biosynthesis; L-histidine biosynthesis; L-histidine from 5-phospho-alpha-D-ribose 1-diphosphate: step 9/9. Catalyzes the sequential NAD-dependent oxidations of L-histidinol to L-histidinaldehyde and then to L-histidine. The chain is Histidinol dehydrogenase from Sulfurisphaera tokodaii (strain DSM 16993 / JCM 10545 / NBRC 100140 / 7) (Sulfolobus tokodaii).